A 99-amino-acid polypeptide reads, in one-letter code: UPF0235 protein Sbal_3028 (99 aa).

The protein belongs to the UPF0235 family.

The sequence is that of UPF0235 protein Sbal_3028 from Shewanella baltica (strain OS155 / ATCC BAA-1091).